Here is a 226-residue protein sequence, read N- to C-terminus: Urease accessory protein UreF (226 aa).

The protein belongs to the UreF family. As to quaternary structure, ureD, UreF and UreG form a complex that acts as a GTP-hydrolysis-dependent molecular chaperone, activating the urease apoprotein by helping to assemble the nickel containing metallocenter of UreC. The UreE protein probably delivers the nickel.

The protein localises to the cytoplasm. Its function is as follows. Required for maturation of urease via the functional incorporation of the urease nickel metallocenter. This Paraburkholderia xenovorans (strain LB400) protein is Urease accessory protein UreF.